A 102-amino-acid polypeptide reads, in one-letter code: Protein isd11 (102 aa).

It belongs to the complex I LYR family.

Its subcellular location is the mitochondrion. Required for mitochondrial iron-sulfur (Fe-S) protein biosynthesis. The polypeptide is Protein isd11 (isd11) (Schizosaccharomyces pombe (strain 972 / ATCC 24843) (Fission yeast)).